A 118-amino-acid chain; its full sequence is ATP-dependent Clp protease adapter protein ClpS (118 aa).

A disordered region spans residues 1 to 24; that stretch reads MNGSSNSGSPGGGQTGDDDGTGFD.

Belongs to the ClpS family. As to quaternary structure, binds to the N-terminal domain of the chaperone ClpA.

Its function is as follows. Involved in the modulation of the specificity of the ClpAP-mediated ATP-dependent protein degradation. This is ATP-dependent Clp protease adapter protein ClpS from Hyphomonas neptunium (strain ATCC 15444).